The chain runs to 83 residues: uncharacterized protein (83 aa).

The next 2 membrane-spanning stretches (helical) occupy residues 11–31 (FYCI…SFLL) and 48–68 (WHNL…HIWM).

The protein localises to the cell membrane. This is an uncharacterized protein from Bacillus subtilis (strain 168).